Reading from the N-terminus, the 665-residue chain is Protein phosphatase 1 regulatory subunit 21 (665 aa).

4 coiled-coil regions span residues 1-84 (MTDL…SESK), 125-206 (LEAQ…RKYQ), 426-477 (ESRE…EAQV), and 586-627 (KRLA…EDQL).

As to quaternary structure, component of the FERRY complex.

It localises to the early endosome. Functionally, component of the FERRY complex (Five-subunit Endosomal Rab5 and RNA/ribosome intermediary). The FERRY complex directly interacts with mRNAs and RAB5A, and functions as a RAB5A effector involved in the localization and the distribution of specific mRNAs most likely by mediating their endosomal transport. The complex recruits mRNAs and ribosomes to early endosomes through direct mRNA-interaction. Putative regulator of protein phosphatase 1 (PP1) activity. May play a role in the endosomal sorting process or in endosome maturation pathway. This chain is Protein phosphatase 1 regulatory subunit 21 (ppp1r21), found in Danio rerio (Zebrafish).